We begin with the raw amino-acid sequence, 163 residues long: MPSFDVVNKIELQELDNAVNNVKKEIETRYDFRNTTTEIDLHKGDLRITVVAADEMKMRALEEMLHAHCVRRKIDPRCLEFKEIEATSRGAVKREVQVKEGIAKDVAQKIVKAIKDSKLKVQGAIQDQQVRVTGKKIDDLQDVIALLREGDFGIPLQFVNMKN.

This sequence belongs to the YajQ family.

Nucleotide-binding protein. The protein is Nucleotide-binding protein Dvul_1191 of Nitratidesulfovibrio vulgaris (strain DP4) (Desulfovibrio vulgaris).